A 295-amino-acid chain; its full sequence is 4-hydroxy-tetrahydrodipicolinate synthase (295 aa).

Residue Thr-47 participates in pyruvate binding. The active-site Proton donor/acceptor is the Tyr-135. Lys-163 acts as the Schiff-base intermediate with substrate in catalysis. Ile-206 is a binding site for pyruvate.

Belongs to the DapA family. Homodimer.

It localises to the cytoplasm. It catalyses the reaction L-aspartate 4-semialdehyde + pyruvate = (2S,4S)-4-hydroxy-2,3,4,5-tetrahydrodipicolinate + H2O + H(+). It participates in amino-acid biosynthesis; L-lysine biosynthesis via DAP pathway; (S)-tetrahydrodipicolinate from L-aspartate: step 3/4. Functionally, catalyzes the condensation of (S)-aspartate-beta-semialdehyde [(S)-ASA] and pyruvate to 4-hydroxy-tetrahydrodipicolinate (HTPA). The polypeptide is 4-hydroxy-tetrahydrodipicolinate synthase (Staphylococcus aureus (strain bovine RF122 / ET3-1)).